The primary structure comprises 2561 residues: Plipastatin synthase subunit A (2561 aa).

A domain 1 (glutamate-activating) region spans residues 1 to 1038 (MSEHTYSLTH…ATVIREGTDS (1038 aa)). Residues 2–300 (SEHTYSLTHA…SSLPIRITVD (299 aa)) are condensation 1. Residues 485-888 (TYAELDMYAS…SIEGVREAAV (404 aa)) are adenylation 1. The Carrier 1 domain maps to 961 to 1036 (APRNVTEMKL…GLATVIREGT (76 aa)). Ser-996 is subject to O-(pantetheine 4'-phosphoryl)serine. The tract at residues 1048 to 1338 (KQETYPVSSA…NTLALRTRPE (291 aa)) is condensation 2. Residues 1048–2554 (KQETYPVSSA…ELTLSALSSI (1507 aa)) are domain 2 (D-ornithine-activating). Residues 1525–1932 (SYRLLNERAN…QTGLVREAAV (408 aa)) form an adenylation 2 region. The region spanning 2007–2081 (APVNDLQKTM…ELCGHITPLA (75 aa)) is the Carrier 2 domain. Residue Ser-2042 is modified to O-(pantetheine 4'-phosphoryl)serine. Residues 2089 to 2554 (AEGEAELTPI…ELTLSALSSI (466 aa)) form an epimerization region.

Belongs to the ATP-dependent AMP-binding enzyme family. Pantetheine 4'-phosphate serves as cofactor.

Its function is as follows. This protein is a multifunctional enzyme, able to activate and polymerize the amino acids Glu and Orn as part of the biosynthesis of the lipopeptide antibiotic lipastatin. The Orn residue is further epimerized to the D-isomer form. The activation sites for these amino acids consist of individual domains. This is Plipastatin synthase subunit A (ppsA) from Bacillus subtilis (strain 168).